The sequence spans 403 residues: 5,7-dihydroxy-2-methylchromone synthase (403 aa).

H68 is a CoA binding site. The active site involves C174. C174 is subject to Cysteine sulfinic acid (-SO2H). CoA is bound by residues L277, S281, and 318-321 (GGRA).

This sequence belongs to the thiolase-like superfamily. Chalcone/stilbene synthases family. As to quaternary structure, homodimer.

It catalyses the reaction 5 malonyl-CoA + 4 H(+) = 5,7-dihydroxy-2-methyl-4H-chromen-4-one + 5 CO2 + 5 CoA + H2O. Its pathway is secondary metabolite biosynthesis; flavonoid biosynthesis. Catalyzes the iterative condensations of 5 molecules of malonyl-CoA to produce a pentaketide 5,7-dihydroxy-2-methylchromone. The protein is 5,7-dihydroxy-2-methylchromone synthase of Aloe arborescens (Kidachi aloe).